A 668-amino-acid polypeptide reads, in one-letter code: RING finger protein 214 (668 aa).

Disordered regions lie at residues 1–87 and 103–125; these read MAAS…AHEE and NGSQSDLKDLTNPAGEEGDTSLR. At A2 the chain carries N-acetylalanine. Residues S15, S40, S48, and S54 each carry the phosphoserine modification. Positions 43-59 are enriched in polar residues; sequence KQKNLSPPSVSSQMITK. A compositionally biased stretch (basic and acidic residues) spans 60–71; it reads ESNRNAHLEHPE. The residue at position 196 (S196) is a Phosphoserine. A coiled-coil region spans residues 220-379; sequence QDIEKNLDKM…AEKEAELHLT (160 aa). The segment at 486–552 is disordered; the sequence is FPILNPALSQ…SSETPRPQPV (67 aa). Phosphoserine is present on residues S497, S511, and S516. A compositionally biased stretch (pro residues) spans 523-536; that stretch reads PHMPPAASIPPPPG. The segment at 623 to 665 adopts an RING-type; atypical zinc-finger fold; it reads CLMCQKLVQPSELHPMACTHALHKECIKFWAQTNTNDTCPFCP.

In Mus musculus (Mouse), this protein is RING finger protein 214 (Rnf214).